The sequence spans 181 residues: Ribulose bisphosphate carboxylase small subunit, chloroplastic 6 (181 aa).

The transit peptide at 1 to 57 (MASSIVSSAAVATRSNVAQASMVAPFTGLKSAASFPVTKKNNNVDITSLASNGGRVR) directs the protein to the chloroplast.

Belongs to the RuBisCO small chain family. In terms of assembly, heterohexadecamer of 8 large and 8 small subunits.

The protein resides in the plastid. It is found in the chloroplast. Functionally, ruBisCO catalyzes two reactions: the carboxylation of D-ribulose 1,5-bisphosphate, the primary event in carbon dioxide fixation, as well as the oxidative fragmentation of the pentose substrate. Both reactions occur simultaneously and in competition at the same active site. Although the small subunit is not catalytic it is essential for maximal activity. This chain is Ribulose bisphosphate carboxylase small subunit, chloroplastic 6, found in Solanum tuberosum (Potato).